The sequence spans 663 residues: Nuclear receptor-binding protein homolog (663 aa).

The segment covering 1 to 14 has biased composition (low complexity); the sequence is MSNSQANAGSSGSA. The disordered stretch occupies residues 1–112; it reads MSNSQANAGS…SEDESEILEE (112 aa). A compositionally biased stretch (polar residues) spans 19–46; sequence LNPSGSATLVPNLTTTNASSQATPASTI. Composition is skewed to low complexity over residues 47 to 57 and 81 to 94; these read PQQQQPQQSQP and VVVA…NLDS. Over residues 101–111 the composition is skewed to acidic residues; that stretch reads DDSEDESEILE. In terms of domain architecture, Protein kinase spans 122 to 392; sequence REEVDQRDVP…ANDLLFHPLL (271 aa). 2 disordered regions span residues 481–505 and 638–663; these read PNFR…EPVD and YVPQ…TTSN. Phosphoserine occurs at positions 489, 495, and 498. T500 is subject to Phosphothreonine. A compositionally biased stretch (low complexity) spans 641 to 652; sequence QDQQQYQQQQQE.

This sequence belongs to the protein kinase superfamily. Ser/Thr protein kinase family.

It is found in the cytoplasm. The protein localises to the cell cortex. In terms of biological role, may play a role in subcellular trafficking between the endoplasmic reticulum and Golgi apparatus. The protein is Nuclear receptor-binding protein homolog of Drosophila pseudoobscura pseudoobscura (Fruit fly).